The primary structure comprises 1351 residues: SLVRMRREGEEDLTLEEKAELCSELELQQKYVDIGSNIIGDLSSLPIVGKIVGTIAAAAMAVTHVASGRLDIEQTLGGCSDVPFDQIKEILEERFNEIDRKLESHSAALEEITKLVEKSISAVEKTRKQMNKRFDEVMRSIQDAKVSPLVSKINNFARYFDTEKERIRGLKLSDYILKLEEPNGILLHFKESRTPRDDSLQAPLFSIIQERYAVPKSIDDELAFKVLYALLYGTQTYVSVMFFLLEQYSFLANHYYEKGDLEKYDEYFNSLNNVFLDFKSSLVGTGTSNNEGLLDRVLQVLVTVKNSEFLGLEKNGVNEMLNEKINLFNKIKVEIEGKQRMTLSETPENFAQISFDKDITTPIGDWRDGREVRYAVQYASETLFSKISHWSDPVGVREKACPTLRMPVDQTRRNILVFRKFDSSKPQLVGEITPYQSNFIDIDRDLYNTANNPDSAVGFKEFTKLNYDGANIRATFEQGRTVFHAAAKSGNSRIMIGLTFLVKSNELNQPDKKGYTPIHVAADSGNAGIVNLLIQRGVSINSKTYNFLQTPLHLAAQRGFVTTFQRLMESPEININERDKDGFTPLHYAVRGGERILEAFINQIRIDLNAKSNKGLTPFHLAIIKDDWPVASTLLGSKKVDVNAVDENNMTALHYAAILGYLETTKQLINLKEINADVVSSPGLLSALHYAILYKHDDVASFLLRSSNVNVNLKALGGITPLHLAVIQGRTQILSLMFDIGVNIEQQTDEKYTPLHLAAMSKYPELIQILLDQGSNFEAKTNSGATPLHLATFKGKSKAALILLNNEVNWRDTDENGQMPIHGAAMNGLLDVAQAIISIDATVLDIKDKNSDTPLNLAAQKSHIDVIKYFIDQGADINTRNKTGHAPLLAFSKKGNLDMVKYLFDKNANVYIADNDGINFFYYAVRNGHLNIVKYAMSEKDKFEWSNIDNNRRDECPKEECAISHFAVCDAVQFDKIEIVKYFVTTLGNFAICGPLHQAARYGHLDIEKYLVEEEDLNVDGSKPDTPLCYASENGHLAVVQYLVSNGAKVNHDCGNGMTAIDKAITKNHLQVVQFLAANGVDFRRKNKLGATPFLTAVSENAFDIAEYLIRENRQDIDINEQNVDKETALHLAVYYKNLQMIKLLVKYGIDMTIRNAYDKTALDIATDLKNSNIVEYLKTKSGKFRREYKSSYGEHSLLQTNKISSFIDGKNIEHDHPQFINADNESSQLFSDTASNIDVIGPLLLIDVLIRYFSKQGYISKESDSASDGITQAAALSITEKFEDVLNSLHNESAKEQVDLAEVHGKVYAALKSGRNSQIHPILCSSLKSISTLKPEDMEKLGSVIMNSHS.

Residues 1–7 form the signal peptide; that stretch reads SLVRMRR. Residues 4–7 are furin-like endopeptidase recognition region; sequence RMRR. The helix H8 is the probable transmembrane region of the tetrameric pore inserted in the target cell membrane stretch occupies residues 226–245; the sequence is VLYALLYGTQTYVSVMFFLL. Cysteines 401 and 1054 form a disulfide. ANK repeat units lie at residues 446–477, 478–509, 513–542, 547–577, 581–610, 614–644, 648–678, 683–711, 717–746, 750–779, 783–812, 816–846, 850–879, 883–912, 916–945, 959–991, 992–1019, 1023–1052, 1056–1085, 1089–1119, 1125–1154, and 1158–1187; these read LYNT…ATFE, QGRT…ELNQ, KGYT…SINS, FLQT…NINE, DGFT…DLNA, KGLT…DVNA, NNMT…NADV, GLLS…NVNV, GGIT…NIEQ, EKYT…NFEA, SGAT…NWRD, NGQM…VLDI, NSDT…DINT, TGHA…NVYI, DGIN…KFEW, EECA…GNFA, ICGP…DLNV, KPDT…KVNH, NGMT…DFRR, LGAT…DIDI, DKET…DMTI, and YDKT…KFRR. Residues 1184–1187 are furin-like endopeptidase recognition region; the sequence is KFRR. A propeptide spanning residues 1188 to 1351 is cleaved from the precursor; sequence EYKSSYGEHS…LGSVIMNSHS (164 aa).

Belongs to the cationic peptide 01 (latrotoxin) family. 03 (alpha-latrotoxin) subfamily. Homotetramer in membranes. Post-translationally, processed by furin-like proteases at both the N- and C-termini. As to expression, expressed in venom gland, cephalothorax, and abdomen tissues from both males and females.

Its subcellular location is the secreted. It localises to the target cell membrane. Its function is as follows. Presynaptic neurotoxin that causes massive release of neurotransmitters from vertebrate (but not invertebrate) nerve terminals and endocrine cells via a complex mechanism involving activation of receptor(s) and toxin insertion into the plasma membrane with subsequent pore formation. Binds to neurexin-1-alpha (NRXN1) in a calcium dependent manner, adhesion G protein-coupled receptor L1 (ADGRL1, also termed latrophilin-1 and calcium-independent receptor of latrotoxin (CIRL)), and receptor-type tyrosine-protein phosphatase S (PTPRS), also termed PTP sigma. NRXN1 and PTPRS are suggested to provide a platform for binding and subsequent pore formation events. In contrast, binding to ADGRL1 does not involve oligomerization and channel formation, but direct downstream stimulation of the synaptic fusion machinery. Induces rapid muscle contracture and loss of twitch tension when added to the isolated and indirectly stimulated chick biventer cervicis nerve-muscle preparation. This chain is Alpha-latrotoxin-Lh1a, found in Latrodectus hasselti (Redback spider).